A 104-amino-acid polypeptide reads, in one-letter code: Pole-localizer protein TmaR (104 aa).

Coiled coils occupy residues 7–34 (IVNQ…NRKR) and 76–96 (SAEI…LTEE).

The protein belongs to the pole-localizer TmaR family.

It localises to the cytoplasm. In terms of biological role, pole-localizer protein involved in the regulation of several cellular processes. This Vibrio campbellii (strain ATCC BAA-1116) protein is Pole-localizer protein TmaR.